A 617-amino-acid polypeptide reads, in one-letter code: Dihydroxy-acid dehydratase (617 aa).

Position 81 (aspartate 81) interacts with Mg(2+). Residue cysteine 122 coordinates [2Fe-2S] cluster. Aspartate 123 and lysine 124 together coordinate Mg(2+). N6-carboxylysine is present on lysine 124. Residue cysteine 195 coordinates [2Fe-2S] cluster. Glutamate 491 lines the Mg(2+) pocket. The active-site Proton acceptor is serine 517.

This sequence belongs to the IlvD/Edd family. As to quaternary structure, homodimer. The cofactor is [2Fe-2S] cluster. Mg(2+) serves as cofactor.

It carries out the reaction (2R)-2,3-dihydroxy-3-methylbutanoate = 3-methyl-2-oxobutanoate + H2O. It catalyses the reaction (2R,3R)-2,3-dihydroxy-3-methylpentanoate = (S)-3-methyl-2-oxopentanoate + H2O. Its pathway is amino-acid biosynthesis; L-isoleucine biosynthesis; L-isoleucine from 2-oxobutanoate: step 3/4. The protein operates within amino-acid biosynthesis; L-valine biosynthesis; L-valine from pyruvate: step 3/4. Its function is as follows. Functions in the biosynthesis of branched-chain amino acids. Catalyzes the dehydration of (2R,3R)-2,3-dihydroxy-3-methylpentanoate (2,3-dihydroxy-3-methylvalerate) into 2-oxo-3-methylpentanoate (2-oxo-3-methylvalerate) and of (2R)-2,3-dihydroxy-3-methylbutanoate (2,3-dihydroxyisovalerate) into 2-oxo-3-methylbutanoate (2-oxoisovalerate), the penultimate precursor to L-isoleucine and L-valine, respectively. This chain is Dihydroxy-acid dehydratase, found in Nitrosococcus oceani (strain ATCC 19707 / BCRC 17464 / JCM 30415 / NCIMB 11848 / C-107).